The following is a 503-amino-acid chain: Lysine--tRNA ligase (503 aa).

Positions 414 and 421 each coordinate Mg(2+).

This sequence belongs to the class-II aminoacyl-tRNA synthetase family. In terms of assembly, homodimer. Mg(2+) is required as a cofactor.

It localises to the cytoplasm. It catalyses the reaction tRNA(Lys) + L-lysine + ATP = L-lysyl-tRNA(Lys) + AMP + diphosphate. In Neisseria meningitidis serogroup B (strain ATCC BAA-335 / MC58), this protein is Lysine--tRNA ligase.